We begin with the raw amino-acid sequence, 1312 residues long: DNA repair protein RAD50 (1312 aa).

Positions 13, 38, 39, 41, 42, 43, 44, 67, 69, and 159 each coordinate ATP. Thr-43 serves as a coordination point for Mg(2+). Mg(2+) is bound at residue Gln-159. Coiled-coil stretches lie at residues 228 to 359, 401 to 598, and 635 to 673; these read TSKE…QADR, RERQ…AKLN, and SQDFESDLDRLKEEIEKSSKQRAMLAGATAVYSQFITQL. Ser-635 carries the phosphoserine; by ATM modification. The Zinc-hook domain maps to 635-734; that stretch reads SQDFESDLDR…RRDEMLGLVP (100 aa). Residues Cys-681 and Cys-684 each contribute to the Zn(2+) site. Thr-690 carries the post-translational modification Phosphothreonine. Coiled coils occupy residues 706–734 and 789–1079; these read RLAPDKLKSTESELKKKEKRRDEMLGLVP and LTDV…GRQK. An N6-acetyllysine modification is found at Lys-959.

This sequence belongs to the SMC family. RAD50 subfamily. As to quaternary structure, component of the MRN complex composed of two heterodimers RAD50 and MRE11 associated with a single NBN. The MRN complexes dimerize on DNA to form joined MRN-MRN oligomers required for DNA double-strand break repair. As part of the MRN complex, interacts with MCM8 and MCM9; the interaction recruits the complex to DNA repair sites. Component of the BASC complex, at least composed of BRCA1, MSH2, MSH6, MLH1, ATM, BLM, RAD50, MRE11 and NBN. Found in a complex with TERF2. Interacts with RINT1. Interacts with BRCA1 via its N-terminal domain. Interacts with DCLRE1C/Artemis. Interacts with MRNIP. Interacts with CYREN (via XLF motif). Interacts with C1QBP and MRE11; interaction takes place in absence of DNA damage to form the MRC (MRE11-RAD50-C1QBP) complex that inhibits the activity of MRE11. In terms of assembly, (Microbial infection) Interacts with herpes simplex virus 1 protein UL12. The cofactor is Zn(2+). In terms of processing, phosphorylation at Ser-635 by ATM in response to DNA damage is required for double-strand break (DSB) repair. As to expression, expressed at very low level in most tissues, except in testis where it is expressed at higher level. Expressed in fibroblasts.

Its subcellular location is the nucleus. It is found in the chromosome. The protein localises to the telomere. The enzyme catalyses ATP + H2O = ADP + phosphate + H(+). In terms of biological role, component of the MRN complex, which plays a central role in double-strand break (DSB) repair, DNA recombination, maintenance of telomere integrity and meiosis. The MRN complex is involved in the repair of DNA double-strand breaks (DSBs) via homologous recombination (HR), an error-free mechanism which primarily occurs during S and G2 phases. The complex (1) mediates the end resection of damaged DNA, which generates proper single-stranded DNA, a key initial steps in HR, and is (2) required for the recruitment of other repair factors and efficient activation of ATM and ATR upon DNA damage. The MRN complex possesses single-strand endonuclease activity and double-strand-specific 3'-5' exonuclease activity, which are provided by MRE11, to initiate end resection, which is required for single-strand invasion and recombination. Within the complex, RAD50 is both required to bind DNA ends and hold them in close proximity and regulate the activity of MRE11. RAD50 provides an ATP-dependent control of MRE11 by positioning DNA ends into the MRE11 active site: ATP-binding induces a large structural change from an open form with accessible MRE11 nuclease sites into a closed form. The MRN complex is also required for DNA damage signaling via activation of the ATM and ATR kinases: the nuclease activity of MRE11 is not required to activate ATM and ATR. The MRN complex is also required for the processing of R-loops. In telomeres the MRN complex may modulate t-loop formation. This Homo sapiens (Human) protein is DNA repair protein RAD50.